The following is a 182-amino-acid chain: Ribosome maturation factor RimM (182 aa).

The region spanning 102-182 is the PRC barrel domain; it reads EEGDYYWKDL…TIEVDWDPGF (81 aa).

This sequence belongs to the RimM family. As to quaternary structure, binds ribosomal protein uS19.

It localises to the cytoplasm. Its function is as follows. An accessory protein needed during the final step in the assembly of 30S ribosomal subunit, possibly for assembly of the head region. Essential for efficient processing of 16S rRNA. May be needed both before and after RbfA during the maturation of 16S rRNA. It has affinity for free ribosomal 30S subunits but not for 70S ribosomes. This chain is Ribosome maturation factor RimM, found in Salmonella gallinarum (strain 287/91 / NCTC 13346).